We begin with the raw amino-acid sequence, 139 residues long: uncharacterized protein (139 aa).

To M.tuberculosis Rv2798c.

This is an uncharacterized protein from Mycobacterium tuberculosis (strain CDC 1551 / Oshkosh).